The sequence spans 208 residues: Peroxiredoxin (208 aa).

A Thioredoxin domain is found at 2 to 156 (PLLGDDFPQL…IVRAVKALQT (155 aa)). The Cysteine sulfenic acid (-SOH) intermediate role is filled by cysteine 44. Arginine 119 is a binding site for substrate.

This sequence belongs to the peroxiredoxin family. Prx6 subfamily. As to quaternary structure, homodecamer. Pentamer of dimers that assemble into a ring structure.

It is found in the cytoplasm. The catalysed reaction is a hydroperoxide + [thioredoxin]-dithiol = an alcohol + [thioredoxin]-disulfide + H2O. In terms of biological role, thiol-specific peroxidase that catalyzes the reduction of hydrogen peroxide and organic hydroperoxides to water and alcohols, respectively. Plays a role in cell protection against oxidative stress by detoxifying peroxides. This chain is Peroxiredoxin, found in Treponema denticola (strain ATCC 35405 / DSM 14222 / CIP 103919 / JCM 8153 / KCTC 15104).